The following is a 41-amino-acid chain: Photosystem I reaction center subunit IX (41 aa).

A helical transmembrane segment spans residues 7 to 27 (YLSTAPVIALAWMSFTAGLLI).

This sequence belongs to the PsaJ family.

The protein resides in the plastid. Its subcellular location is the chloroplast thylakoid membrane. May help in the organization of the PsaE and PsaF subunits. This chain is Photosystem I reaction center subunit IX, found in Tupiella akineta (Green alga).